We begin with the raw amino-acid sequence, 453 residues long: MIKKKFYIENYGCQMNISDSEIVSSILNNKGFIKTENLKEANIILINTCSIRDKSEKKILLRINQIKFIIKKNNDILIGILGCMAYKFKNIKEKKLINLVVGPDSYREIPNLINNFFKKKGEYISTSFSKTETYADIIPKREEKKITAFVTIMRGCDNMCTFCVVPFTRGREKSRDPYSIIKECKFLFKKGYKEIILLGQNVDSYLWYGGGLKKKFKIKEIKNEEIINFSKLLELVAISVPLMRIRFCTSNPNDMSDNVLNVIKKYINICKHIHLPVQSGSNRILSLMNRKHTCEDYILLINKIKNIIPNCSLSCDIITGFCNENENDHNETLNLMNYVKYNFSYMFIYSHRIGTYAYKKLIDNVSLSTKKRRLTEIINLQKTHSYYRNRKYIGSIQDILIEGISTKNINFFYGRNSGNDIVIFPKKNYKIGDFIKVKINNCTSATLVGDIYV.

Positions 4–118 constitute an MTTase N-terminal domain; it reads KKFYIENYGC…IPNLINNFFK (115 aa). Positions 13, 49, 83, 156, 160, and 163 each coordinate [4Fe-4S] cluster. The Radical SAM core domain maps to 142–388; it reads EEKKITAFVT…NLQKTHSYYR (247 aa). Residues 390–453 form the TRAM domain; it reads RKYIGSIQDI…SATLVGDIYV (64 aa).

This sequence belongs to the methylthiotransferase family. MiaB subfamily. As to quaternary structure, monomer. The cofactor is [4Fe-4S] cluster.

It is found in the cytoplasm. The catalysed reaction is N(6)-dimethylallyladenosine(37) in tRNA + (sulfur carrier)-SH + AH2 + 2 S-adenosyl-L-methionine = 2-methylsulfanyl-N(6)-dimethylallyladenosine(37) in tRNA + (sulfur carrier)-H + 5'-deoxyadenosine + L-methionine + A + S-adenosyl-L-homocysteine + 2 H(+). Its function is as follows. Catalyzes the methylthiolation of N6-(dimethylallyl)adenosine (i(6)A), leading to the formation of 2-methylthio-N6-(dimethylallyl)adenosine (ms(2)i(6)A) at position 37 in tRNAs that read codons beginning with uridine. This chain is tRNA-2-methylthio-N(6)-dimethylallyladenosine synthase, found in Karelsulcia muelleri (strain GWSS) (Sulcia muelleri).